Consider the following 263-residue polypeptide: Oxygen-evolving enhancer protein 2-1, chloroplastic (263 aa).

Serine 153 is subject to Phosphoserine.

This sequence belongs to the PsbP family. Interacts with WAK1.

The protein resides in the plastid. Its subcellular location is the chloroplast thylakoid lumen. May be involved in the regulation of photosystem II. This Arabidopsis thaliana (Mouse-ear cress) protein is Oxygen-evolving enhancer protein 2-1, chloroplastic (PSBP1).